Here is a 408-residue protein sequence, read N- to C-terminus: UPF0496 protein At5g66670 (408 aa).

2 helical membrane passes run 239–259 (VVFATAFVTVFVLSVVAAAMM) and 262–282 (PVLSAVASGLTTPIEVVGMWC).

Belongs to the UPF0496 family.

It localises to the membrane. The polypeptide is UPF0496 protein At5g66670 (Arabidopsis thaliana (Mouse-ear cress)).